Here is a 260-residue protein sequence, read N- to C-terminus: MAYKPQFYPGATKVAENRRNHLNPNYELEKLREIPDEDVVKIMGHRQPGEDYKTVHPPLEEMDMPADYVRDLVEPLNGAKEGHRVRYIQFADSMYFAPAQPYDRSRLYMIRLRGVDAGTLSGRQVVECRESDLEEFSKNLLMDTELFDPATSGVRGATVHGHSLRLDENGMMFDALQRCVFDEKTGHVMYVKDQVGKPLDQPVDVGEPMPEAKLREITTIYRKDGIAMRTDPEVIEVVKRIHRARTLGGYIPTNEIFKGL.

Residue arginine 123 coordinates coenzyme M.

This sequence belongs to the methyl-coenzyme M reductase gamma subunit family. In terms of assembly, MCR is a hexamer of two alpha, two beta, and two gamma chains, forming a dimer of heterotrimers. It depends on coenzyme F430 as a cofactor.

It is found in the cytoplasm. The catalysed reaction is coenzyme B + methyl-coenzyme M = methane + coenzyme M-coenzyme B heterodisulfide. It participates in one-carbon metabolism; methyl-coenzyme M reduction; methane from methyl-coenzyme M: step 1/1. Component of the methyl-coenzyme M reductase (MCR) I that catalyzes the reductive cleavage of methyl-coenzyme M (CoM-S-CH3 or 2-(methylthio)ethanesulfonate) using coenzyme B (CoB or 7-mercaptoheptanoylthreonine phosphate) as reductant which results in the production of methane and the mixed heterodisulfide of CoB and CoM (CoM-S-S-CoB). This is the final step in methanogenesis. The polypeptide is Methyl-coenzyme M reductase subunit gamma (mcrG) (Methanococcus vannielii).